Consider the following 330-residue polypeptide: Aspartate--ammonia ligase (330 aa).

The protein belongs to the class-II aminoacyl-tRNA synthetase family. AsnA subfamily.

The protein resides in the cytoplasm. It catalyses the reaction L-aspartate + NH4(+) + ATP = L-asparagine + AMP + diphosphate + H(+). It participates in amino-acid biosynthesis; L-asparagine biosynthesis; L-asparagine from L-aspartate (ammonia route): step 1/1. The chain is Aspartate--ammonia ligase from Streptococcus thermophilus (strain CNRZ 1066).